The primary structure comprises 621 residues: tRNA uridine 5-carboxymethylaminomethyl modification enzyme MnmG (621 aa).

17-22 (GGGHAG) lines the FAD pocket. 276–290 (GPRYCPSIEDKIMKF) contacts NAD(+).

Belongs to the MnmG family. In terms of assembly, homodimer. Heterotetramer of two MnmE and two MnmG subunits. The cofactor is FAD.

The protein resides in the cytoplasm. Functionally, NAD-binding protein involved in the addition of a carboxymethylaminomethyl (cmnm) group at the wobble position (U34) of certain tRNAs, forming tRNA-cmnm(5)s(2)U34. This chain is tRNA uridine 5-carboxymethylaminomethyl modification enzyme MnmG, found in Zymomonas mobilis subsp. mobilis (strain ATCC 31821 / ZM4 / CP4).